We begin with the raw amino-acid sequence, 387 residues long: Protein RecA, chromosomal (387 aa).

Position 80-87 (80-87) interacts with ATP; it reads GPESSGKT. Positions 352-387 are disordered; sequence EVAETTEDTSTKAKATKAKKEEKVVETEEIELELED. Acidic residues predominate over residues 378 to 387; the sequence is TEEIELELED.

Belongs to the RecA family.

The protein localises to the cytoplasm. Can catalyze the hydrolysis of ATP in the presence of single-stranded DNA, the ATP-dependent uptake of single-stranded DNA by duplex DNA, and the ATP-dependent hybridization of homologous single-stranded DNAs. It interacts with LexA causing its activation and leading to its autocatalytic cleavage. In Lactococcus lactis subsp. lactis (strain IL1403) (Streptococcus lactis), this protein is Protein RecA, chromosomal.